The chain runs to 551 residues: Putative transport protein CGSHiGG_02670 (551 aa).

5 helical membrane passes run isoleucine 4 to tryptophan 24, glycine 28 to asparagine 48, phenylalanine 65 to serine 85, alanine 95 to alanine 115, and valine 157 to isoleucine 177. 2 consecutive RCK C-terminal domains span residues arginine 191–histidine 275 and valine 277–asparagine 360. The next 6 helical transmembrane spans lie at methionine 370–isoleucine 390, alanine 402–phenylalanine 424, isoleucine 438–valine 458, leucine 463–isoleucine 483, tyrosine 492–alanine 512, and valine 529–tryptophan 549.

The protein belongs to the AAE transporter (TC 2.A.81) family. YidE subfamily.

Its subcellular location is the cell membrane. This is Putative transport protein CGSHiGG_02670 from Haemophilus influenzae (strain PittGG).